The primary structure comprises 97 residues: Antitoxin TacA2 (97 aa).

It belongs to the TacA antitoxin family. As to quaternary structure, homodimer. Forms a complex with cognate toxin TacT2.

Its function is as follows. Antitoxin component of a type II toxin-antitoxin (TA) system. Counteracts the toxic effect of cognate toxin TacT2. In terms of biological role, the TacA2-TacT2 complex both represses and derepresses expression of its own operon. The polypeptide is Antitoxin TacA2 (Salmonella enteritidis).